We begin with the raw amino-acid sequence, 473 residues long: Ornithine decarboxylase (473 aa).

Position 106 is an N6-(pyridoxal phosphate)lysine (Lys106). Pyridoxal 5'-phosphate contacts are provided by residues Ser240, Gly277, and 313 to 316 (EPGR). 367–368 (FD) is a binding site for substrate. Cys417 serves as the catalytic Proton donor; shared with dimeric partner. Residue Asp418 participates in substrate binding. A pyridoxal 5'-phosphate-binding site is contributed by Tyr447.

This sequence belongs to the Orn/Lys/Arg decarboxylase class-II family. As to quaternary structure, homodimer. Only the dimer is catalytically active, as the active sites are constructed of residues from both monomers. Pyridoxal 5'-phosphate is required as a cofactor.

The protein resides in the cytoplasm. The catalysed reaction is L-ornithine + H(+) = putrescine + CO2. It participates in amine and polyamine biosynthesis; putrescine biosynthesis via L-ornithine pathway; putrescine from L-ornithine: step 1/1. Its activity is regulated as follows. Inhibited by antizyme (AZ) OAZ1 in response to polyamine levels. AZ inhibits the assembly of the functional homodimer by binding to ODC monomers and targeting them for ubiquitin-independent proteolytic destruction by the 26S proteasome. Catalyzes the first and rate-limiting step of polyamine biosynthesis that converts ornithine into putrescine, which is the precursor for the polyamines, spermidine and spermine. Polyamines are essential for cell proliferation and are implicated in cellular processes, ranging from DNA replication to apoptosis. The polypeptide is Ornithine decarboxylase (SPE1) (Candida albicans (strain SC5314 / ATCC MYA-2876) (Yeast)).